The chain runs to 356 residues: Heparan sulfate 2-O-sulfotransferase 1 (356 aa).

Residues 1–11 (MGLLRIMMPPK) lie on the Cytoplasmic side of the membrane. The chain crosses the membrane as a helical; Signal-anchor for type II membrane protein span at residues 12–28 (LQLLAVVAFAVAMLFLE). Residues 24-51 (MLFLENQIQKLEESRAKLERAIARHEVR) are a coiled coil. The Lumenal segment spans residues 29 to 356 (NQIQKLEESR…FYEKIYPKSN (328 aa)). Residues Lys-83, Thr-84, Ala-85, Ser-86, Thr-87, and Ser-88 each coordinate adenosine 3',5'-bisphosphate. 2 N-linked (GlcNAc...) asparagine glycosylation sites follow: Asn-108 and Asn-127. Active-site residues include His-140 and His-142. Residues Arg-164 and Ser-172 each contribute to the adenosine 3',5'-bisphosphate site. 2 disulfide bridges follow: Cys-201–Cys-209 and Cys-222–Cys-228. Adenosine 3',5'-bisphosphate contacts are provided by Tyr-279, Ser-285, Thr-290, and Lys-293.

The protein belongs to the sulfotransferase 3 family. In terms of assembly, homotrimer. Interacts with the C5-epimerase GLCE. Post-translationally, N-glycosylated.

Its subcellular location is the golgi apparatus membrane. Its function is as follows. Catalyzes the transfer of a sulfo group from 3'-phospho-5'-adenylyl sulfate (PAPS) to the 2-OH position of iduronic acid (IdoA) or glucuronic acid (GlcA) within the heparan sulfate (HS) chain and participates in HS biosynthesis. Required for metanephric development of kidney formation, suggesting that 2-O-sulfation within HS is essential for signaling between ureteric bud and metanephric mesenchyme. The protein is Heparan sulfate 2-O-sulfotransferase 1 of Cricetulus griseus (Chinese hamster).